Consider the following 399-residue polypeptide: Odorant receptor 42b (399 aa).

At 1-45 the chain is on the cytoplasmic side; sequence MVFELIRPAPLTEQKRSRDGCIYLYRAMKFIGWLPPKQGVLRYVY. The helical transmembrane segment at 46–66 threads the bilayer; it reads LTWTLMTFVWCTTYLPLGFLG. Over 67-83 the chain is Extracellular; that stretch reads SYMTQIKSFSPGEFLTS. The chain crosses the membrane as a helical span at residues 84–104; it reads LQVCINAYGSSVKVAITYSML. The Cytoplasmic portion of the chain corresponds to 105-140; it reads WRLIKAKNILDQLDLRCTAMEEREKIHLVVARSNHA. A helical transmembrane segment spans residues 141 to 161; that stretch reads FLIFTFVYCGYAGSTYLSSVL. Residues 162 to 178 lie on the Extracellular side of the membrane; sequence SGRPPWQLYNPFIDWHD. Residues 179-199 traverse the membrane as a helical segment; it reads GTLKLWVASTLEYMVMSGAVL. At 200–268 the chain is on the cytoplasmic side; it reads QDQLSDSYPL…AIIKPVIQGT (69 aa). Residues 269–289 traverse the membrane as a helical segment; sequence IFTQFLLIGLVLGFTLINVFF. The Extracellular segment spans residues 290 to 292; that stretch reads FSD. The helical transmembrane segment at 293–313 threads the bilayer; that stretch reads IWTGIASFMFVITILLQTFPF. The Cytoplasmic portion of the chain corresponds to 314–356; that stretch reads CYTCNLIMEDCESLTHAIFQSNWVDASRRYKTTLLYFLQNVQQ. Residues 357–377 form a helical membrane-spanning segment; the sequence is PIVFIAGGIFQISMSSNISVA. At 378–399 the chain is on the extracellular side; that stretch reads KFAFSVITITKQMNIADKFKTD.

The protein belongs to the insect chemoreceptor superfamily. Heteromeric odorant receptor channel (TC 1.A.69) family. Or2a subfamily. As to quaternary structure, interacts with Orco. Complexes exist early in the endomembrane system in olfactory sensory neurons (OSNs), coupling these complexes to the conserved ciliary trafficking pathway. Expressed in olfactory sensory neurons in the antenna.

The protein localises to the cell membrane. Functionally, odorant receptor which mediates acceptance or avoidance behavior, depending on its substrates. The odorant receptor repertoire encodes a large collection of odor stimuli that vary widely in identity, intensity, and duration. May form a complex with Orco to form odorant-sensing units, providing sensitive and prolonged odorant signaling and calcium permeability. Involved in the behavioral responses to ethyl acetate and pentyl acetate. This chain is Odorant receptor 42b (Or42b), found in Drosophila melanogaster (Fruit fly).